Here is a 120-residue protein sequence, read N- to C-terminus: Large ribosomal subunit protein uL22 (120 aa).

It belongs to the universal ribosomal protein uL22 family. As to quaternary structure, part of the 50S ribosomal subunit.

This protein binds specifically to 23S rRNA; its binding is stimulated by other ribosomal proteins, e.g. L4, L17, and L20. It is important during the early stages of 50S assembly. It makes multiple contacts with different domains of the 23S rRNA in the assembled 50S subunit and ribosome. In terms of biological role, the globular domain of the protein is located near the polypeptide exit tunnel on the outside of the subunit, while an extended beta-hairpin is found that lines the wall of the exit tunnel in the center of the 70S ribosome. The protein is Large ribosomal subunit protein uL22 of Corynebacterium glutamicum (strain R).